A 447-amino-acid chain; its full sequence is SNF1-related protein kinase regulatory subunit gamma-1-like (447 aa).

Alanine 2 carries the post-translational modification N-acetylalanine. Serine 35 is modified (phosphoserine). CBS domains are found at residues 54 to 120 (QVPG…SAEL), 214 to 275 (SFRW…GRDW), 292 to 350 (MSPN…PEVF), and 374 to 433 (LAIP…PNYF).

Belongs to the 5'-AMP-activated protein kinase gamma subunit family. In terms of assembly, subunit of a probable heterotrimeric complex consisting of an alpha catalytic (KIN10 or KIN11) subunit, and a beta (KINB) and a gamma (KING or SNF4) non-catalytic regulatory subunits.

Regulatory subunit of the probable trimeric SNF1-related protein kinase (SnRK) complex, which may play a role in a signal transduction cascade regulating gene expression and carbohydrate metabolism in higher plants. This chain is SNF1-related protein kinase regulatory subunit gamma-1-like (CBSCBS2), found in Arabidopsis thaliana (Mouse-ear cress).